The primary structure comprises 312 residues: Ribosomal protein L11 methyltransferase (312 aa).

S-adenosyl-L-methionine contacts are provided by T163, G184, D206, and N248.

Belongs to the methyltransferase superfamily. PrmA family.

The protein resides in the cytoplasm. The catalysed reaction is L-lysyl-[protein] + 3 S-adenosyl-L-methionine = N(6),N(6),N(6)-trimethyl-L-lysyl-[protein] + 3 S-adenosyl-L-homocysteine + 3 H(+). In terms of biological role, methylates ribosomal protein L11. In Clostridium botulinum (strain Hall / ATCC 3502 / NCTC 13319 / Type A), this protein is Ribosomal protein L11 methyltransferase.